We begin with the raw amino-acid sequence, 474 residues long: tRNA-2-methylthio-N(6)-dimethylallyladenosine synthase (474 aa).

Residues 3–120 (KKLHIKTWGC…LPDMIEQVRR (118 aa)) form the MTTase N-terminal domain. Residues C12, C49, C83, C157, C161, and C164 each contribute to the [4Fe-4S] cluster site. One can recognise a Radical SAM core domain in the interval 143-375 (RAEGPTAFVS…QDRITQQAMR (233 aa)). The TRAM domain maps to 378–441 (RHMMGTVQRI…TNSLRGKFIR (64 aa)).

Belongs to the methylthiotransferase family. MiaB subfamily. As to quaternary structure, monomer. The cofactor is [4Fe-4S] cluster.

Its subcellular location is the cytoplasm. It catalyses the reaction N(6)-dimethylallyladenosine(37) in tRNA + (sulfur carrier)-SH + AH2 + 2 S-adenosyl-L-methionine = 2-methylsulfanyl-N(6)-dimethylallyladenosine(37) in tRNA + (sulfur carrier)-H + 5'-deoxyadenosine + L-methionine + A + S-adenosyl-L-homocysteine + 2 H(+). Catalyzes the methylthiolation of N6-(dimethylallyl)adenosine (i(6)A), leading to the formation of 2-methylthio-N6-(dimethylallyl)adenosine (ms(2)i(6)A) at position 37 in tRNAs that read codons beginning with uridine. The protein is tRNA-2-methylthio-N(6)-dimethylallyladenosine synthase of Shewanella sp. (strain MR-4).